The sequence spans 89 residues: Small ribosomal subunit protein uS15 (89 aa).

Belongs to the universal ribosomal protein uS15 family. Part of the 30S ribosomal subunit. Forms a bridge to the 50S subunit in the 70S ribosome, contacting the 23S rRNA.

Its function is as follows. One of the primary rRNA binding proteins, it binds directly to 16S rRNA where it helps nucleate assembly of the platform of the 30S subunit by binding and bridging several RNA helices of the 16S rRNA. In terms of biological role, forms an intersubunit bridge (bridge B4) with the 23S rRNA of the 50S subunit in the ribosome. The protein is Small ribosomal subunit protein uS15 of Oleidesulfovibrio alaskensis (strain ATCC BAA-1058 / DSM 17464 / G20) (Desulfovibrio alaskensis).